The following is a 462-amino-acid chain: NAD-capped RNA hydrolase NUDT12 (462 aa).

Lys10 carries the post-translational modification N6-succinyllysine. 3 ANK repeats span residues Glu11–Asn40, Asn45–Leu74, and Ala78–Leu98. Lys185 carries the post-translational modification N6-succinyllysine. Cys284 and Cys287 together coordinate Zn(2+). Lys292 is modified (N6-succinyllysine). 2 residues coordinate Zn(2+): Cys302 and Cys307. Residues Tyr318, Ala354–Phe356, Glu370, Glu374, and Glu415 each bind substrate. A Nudix hydrolase domain is found at Pro319–Lys453. Positions 354, 370, 374, and 415 each coordinate Mg(2+). A Nudix box motif is present at residues Gly355–Gly376. Positions Pro460–Leu462 match the Microbody targeting signal motif.

It belongs to the Nudix hydrolase family. NudC subfamily. In terms of assembly, homodimer. Homodimerization is essential for its catalytic activity and protein stability. Interacts (via ANK repeats) with BLMH. It depends on Mg(2+) as a cofactor. Zn(2+) serves as cofactor. In terms of tissue distribution, expressed abundantly in the liver and kidney.

The protein localises to the cytoplasm. It is found in the peroxisome. Its subcellular location is the cytoplasmic granule. It carries out the reaction a 5'-end NAD(+)-phospho-ribonucleoside in mRNA + H2O = a 5'-end phospho-adenosine-phospho-ribonucleoside in mRNA + beta-nicotinamide D-ribonucleotide + 2 H(+). It catalyses the reaction NAD(+) + H2O = beta-nicotinamide D-ribonucleotide + AMP + 2 H(+). The enzyme catalyses NADH + H2O = reduced beta-nicotinamide D-ribonucleotide + AMP + 2 H(+). The catalysed reaction is NADPH + H2O = reduced beta-nicotinamide D-ribonucleotide + adenosine 2',5'-bisphosphate + 2 H(+). In terms of biological role, mRNA decapping enzyme that specifically removes the nicotinamide adenine dinucleotide (NAD) cap from a subset of mRNAs by hydrolyzing the diphosphate linkage to produce nicotinamide mononucleotide (NMN) and 5' monophosphate mRNA. The NAD-cap is present at the 5'-end of some RNAs; in contrast to the canonical N7 methylguanosine (m7G) cap, the NAD cap promotes mRNA decay. Preferentially acts on NAD-capped transcripts in response to nutrient stress. Also acts on free nicotinamide adenine dinucleotide molecules: hydrolyzes NAD(H) into NMN(H) and AMP, and NADPH into NMNH and 2',5'-ADP. May act to regulate the concentration of peroxisomal nicotinamide nucleotide cofactors required for oxidative metabolism in this organelle. Regulates the levels of circadian clock components PER1, PER2, PER3 and CRY2 in the liver. This Mus musculus (Mouse) protein is NAD-capped RNA hydrolase NUDT12.